Here is a 392-residue protein sequence, read N- to C-terminus: Chaperone protein DnaJ (392 aa).

Positions 2–67 (DYYTILGVAK…QKRESYDRYG (66 aa)) constitute a J domain. The CR-type zinc-finger motif lies at 149–227 (GVEKELLVSG…CRGQGRIKDK (79 aa)). Residues C162, C165, C179, C182, C201, C204, C215, and C218 each coordinate Zn(2+). CXXCXGXG motif repeat units lie at residues 162 to 169 (CDACSGSG), 179 to 186 (CDRCKGSG), 201 to 208 (CPDCSGEG), and 215 to 222 (CSVCRGQG).

The protein belongs to the DnaJ family. In terms of assembly, homodimer. The cofactor is Zn(2+).

It localises to the cytoplasm. In terms of biological role, participates actively in the response to hyperosmotic and heat shock by preventing the aggregation of stress-denatured proteins and by disaggregating proteins, also in an autonomous, DnaK-independent fashion. Unfolded proteins bind initially to DnaJ; upon interaction with the DnaJ-bound protein, DnaK hydrolyzes its bound ATP, resulting in the formation of a stable complex. GrpE releases ADP from DnaK; ATP binding to DnaK triggers the release of the substrate protein, thus completing the reaction cycle. Several rounds of ATP-dependent interactions between DnaJ, DnaK and GrpE are required for fully efficient folding. Also involved, together with DnaK and GrpE, in the DNA replication of plasmids through activation of initiation proteins. This is Chaperone protein DnaJ from Chlamydia trachomatis serovar L2 (strain ATCC VR-902B / DSM 19102 / 434/Bu).